The primary structure comprises 269 residues: Monofunctional glycosyltransferase (269 aa).

A helical membrane pass occupies residues 46–66; it reads ILLTILIIIALFIGIMYFLST.

The protein belongs to the glycosyltransferase 51 family.

It localises to the cell membrane. It carries out the reaction [GlcNAc-(1-&gt;4)-Mur2Ac(oyl-L-Ala-gamma-D-Glu-L-Lys-D-Ala-D-Ala)](n)-di-trans,octa-cis-undecaprenyl diphosphate + beta-D-GlcNAc-(1-&gt;4)-Mur2Ac(oyl-L-Ala-gamma-D-Glu-L-Lys-D-Ala-D-Ala)-di-trans,octa-cis-undecaprenyl diphosphate = [GlcNAc-(1-&gt;4)-Mur2Ac(oyl-L-Ala-gamma-D-Glu-L-Lys-D-Ala-D-Ala)](n+1)-di-trans,octa-cis-undecaprenyl diphosphate + di-trans,octa-cis-undecaprenyl diphosphate + H(+). It participates in cell wall biogenesis; peptidoglycan biosynthesis. In terms of biological role, peptidoglycan polymerase that catalyzes glycan chain elongation using lipid-linked disaccharide-pentapeptide as the substrate. The sequence is that of Monofunctional glycosyltransferase from Staphylococcus aureus (strain Newman).